The sequence spans 471 residues: 6-phosphofructo-2-kinase/fructose-2,6-bisphosphatase 1 (471 aa).

The residue at position 2 (Ser-2) is an N-acetylserine. The 6-phosphofructo-2-kinase stretch occupies residues 2-250 (SREMGELTQT…AYYLMNIHVT (249 aa)). Phosphoserine; by PKA is present on Ser-33. 49 to 57 (GLPARGKTY) provides a ligand contact to ATP. Beta-D-fructose 6-phosphate is bound by residues Arg-82 and Arg-105. Asp-131 is an active-site residue. 2 residues coordinate beta-D-fructose 6-phosphate: Thr-133 and Arg-139. Ser-141 is modified (phosphoserine). Cys-161 is a catalytic residue. 170–175 (NIKQVK) contacts ATP. 3 residues coordinate beta-D-fructose 6-phosphate: Lys-175, Arg-196, and Tyr-200. The segment at 251 to 471 (PRSIYLCRHG…EALDTVPAHY (221 aa)) is fructose-2,6-bisphosphatase. Position 258 (Arg-258) interacts with beta-D-fructose 2,6-bisphosphate. The Tele-phosphohistidine intermediate role is filled by His-259. Beta-D-fructose 2,6-bisphosphate contacts are provided by Asn-265, Gly-271, and Arg-308. Glu-328 functions as the Proton donor/acceptor in the catalytic mechanism. The beta-D-fructose 2,6-bisphosphate site is built by Tyr-339, Arg-353, Lys-357, Tyr-368, Gln-394, and Arg-398. Residue 350–353 (FALR) coordinates ATP. Residues 394–398 (QAVMR) and Tyr-430 each bind ATP.

In the C-terminal section; belongs to the phosphoglycerate mutase family. Homodimer. In terms of tissue distribution, liver.

It catalyses the reaction beta-D-fructose 2,6-bisphosphate + H2O = beta-D-fructose 6-phosphate + phosphate. It carries out the reaction beta-D-fructose 6-phosphate + ATP = beta-D-fructose 2,6-bisphosphate + ADP + H(+). Its activity is regulated as follows. Phosphorylation at Ser-33 inhibits the kinase and activates the bisphosphatase. Functionally, synthesis and degradation of fructose 2,6-bisphosphate. In Mus musculus (Mouse), this protein is 6-phosphofructo-2-kinase/fructose-2,6-bisphosphatase 1.